The sequence spans 1591 residues: Rho guanine nucleotide exchange factor TIAM1 (1591 aa).

Positions 1 to 70 (MGNAESQNVD…TPSIPQSLAE (70 aa)) are disordered. G2 carries N-myristoyl glycine lipidation. Basic and acidic residues predominate over residues 8–19 (NVDHEFYGEKHA). Basic residues predominate over residues 20–49 (SLGRKHTSRSLRLSHKTRRTRHASSGKAIH). The segment covering 53–67 (EVSTRSSSTPSIPQS) has biased composition (low complexity). 3 positions are modified to phosphoserine: S231, S356, and S358. Disordered stretches follow at residues 305–380 (QISL…DRAR) and 393–422 (MSTTNSESLEEAGSAHSDEQSSGTLSSPGQ). Polar residues predominate over residues 340-359 (TTDTDLLSRRSNATNSSYSP). Over residues 367–376 (GSDSGSSSTG) the composition is skewed to low complexity. The span at 412–422 (QSSGTLSSPGQ) shows a compositional bias: polar residues. Residues 434-549 (VRKAGALAVK…TAIHSACAAA (116 aa)) form the PH 1 domain. Residue S695 is modified to Phosphoserine. The RBD domain maps to 765–832 (TPSWFCLPNN…QPEEDIYELL (68 aa)). Y829 carries the phosphotyrosine; by NTRK2 modification. The region spanning 845 to 908 (NIHIEKSDAA…NNRAAGTLNS (64 aa)) is the PDZ domain. A disordered region spans residues 933–1034 (GVELLENPPH…TSPQLATTRQ (102 aa)). Polar residues predominate over residues 958-975 (LTSNPGHSLSSEQGSSAE). Over residues 977–990 (APEEGEGPDLESSD) the composition is skewed to acidic residues. A compositionally biased stretch (low complexity) spans 1014 to 1028 (PSDSSPSPQDATSPQ). The DH domain maps to 1040–1234 (KLRKVICELL…NKVASHINEM (195 aa)). The PH 2 domain occupies 1261-1397 (DLSMGDLLLH…KSVHSILRDK (137 aa)). The residue at position 1323 (Y1323) is a Phosphotyrosine. Residues K1404 and K1420 each participate in a glycyl lysine isopeptide (Lys-Gly) (interchain with G-Cter in ubiquitin) cross-link. The tract at residues 1456-1481 (TIDSDAISASSPEKEPQQPAGGGDTD) is disordered. Residue S1519 is modified to Phosphoserine.

The protein belongs to the TIAM family. In terms of assembly, component of the Par polarity complex, composed of at least phosphorylated PRKCZ, PARD3 and TIAM1. Interacts with BAIAP2. Interacts (via PDZ domain) with CNTNAP4, SDC1 and SDC3 (via C-terminus). Interacts with CD44, PARD3 and MAPK8IP2. Interacts with EPHA8; regulates clathrin-mediated endocytosis of EPHA8. Interacts with NTRK2; mediates the activation of RAC1 by BDNF. In terms of processing, ubiquitinated. Undergoes 'Lys-48' ubiquitination at Lys-1404 and Lys-1420 by a CUL3(KBTBD6/7) E3 ubiquitin ligase complex composed of CUL3, RBX1, KBTBD6 and KBTBD7. 'Lys-48' ubiquitination at Lys-1404 and Lys-1420 triggers proteasomal degradation. Ubiquitination at Lys-1404 and Lys-1420 by CUL3(KBTBD6/7) also requires the membrane-associated protein GABARAP and may therefore be spatially restricted within the cell. In terms of tissue distribution, highly expressed in brain and testis and at low or moderate levels in almost all other normal tissues. Found in virtually all analyzed tumor cell lines including B- and T-lymphomas, neuroblastomas, melanomas and carcinomas.

The protein resides in the cell junction. Its subcellular location is the cell membrane. Guanyl-nucleotide exchange factor that activates RHO-like proteins and connects extracellular signals to cytoskeletal activities. Activates RAC1, CDC42, and to a lesser extent RHOA and their downstream signaling to regulate processes like cell adhesion and cell migration. This Mus musculus (Mouse) protein is Rho guanine nucleotide exchange factor TIAM1.